The sequence spans 422 residues: MVNCTSDYCVKDISLAPEGMKKIDWVSRFMPVLQHIRREFEEKKPFKGVRIAATLHLEMKTAFLLLTLKAGGAKVSAAASNPLSTQDDVVAALAKEGVKVYAIRGESKEEYYEFMNKALDIRPNIIIDDGADMVSLVHTERKELLDEIWGASEETTTGVIRLRAMERDKVLRFPVIAVNDSYMKYLFDNRYGTGQSTWDGIMRATNLLVAGKNVVVVGYGWCGRGIAMRARGLGATVIVVEVDPIKALEARMDGFLVMSMKEAAKIGDIFVTATGNIKCIRREHFELMKDGAIMANAGHFDVEIWKPDLEELAVEISNPRPNVTEYKLKDGRRLYLLADGRLVNLVAADGHPAEIMDMSFALQAKAAEYIKENHERLEPRVYVLPREIDEMVARIKLQSMGINIEELTEEQKKYLESWQHGT.

Substrate contacts are provided by Asp129 and Glu154. 155–157 (TTT) contributes to the NAD(+) binding site. Residues Lys184 and Asp188 each contribute to the substrate site. NAD(+)-binding positions include Asn189, 218–223 (GYGWCG), Glu241, Asn276, 297–299 (AGH), and Asn344.

The protein belongs to the adenosylhomocysteinase family. Requires NAD(+) as cofactor.

Its subcellular location is the cytoplasm. The catalysed reaction is S-adenosyl-L-homocysteine + H2O = L-homocysteine + adenosine. It functions in the pathway amino-acid biosynthesis; L-homocysteine biosynthesis; L-homocysteine from S-adenosyl-L-homocysteine: step 1/1. May play a key role in the regulation of the intracellular concentration of adenosylhomocysteine. The polypeptide is Adenosylhomocysteinase (Pyrococcus abyssi (strain GE5 / Orsay)).